A 337-amino-acid polypeptide reads, in one-letter code: 1-aminocyclopropane-1-carboxylate deaminase (337 aa).

Lys50 bears the N6-(pyridoxal phosphate)lysine mark. Residue Ser77 is the Nucleophile of the active site.

Belongs to the ACC deaminase/D-cysteine desulfhydrase family. In terms of assembly, homotrimer. It depends on pyridoxal 5'-phosphate as a cofactor.

The enzyme catalyses 1-aminocyclopropane-1-carboxylate + H2O = 2-oxobutanoate + NH4(+). Catalyzes a cyclopropane ring-opening reaction, the irreversible conversion of 1-aminocyclopropane-1-carboxylate (ACC) to ammonia and alpha-ketobutyrate. Allows growth on ACC as a nitrogen source. This chain is 1-aminocyclopropane-1-carboxylate deaminase, found in Rhizobium radiobacter (Agrobacterium tumefaciens).